A 584-amino-acid polypeptide reads, in one-letter code: Eukaryotic translation initiation factor 2D (584 aa).

Met-1 bears the N-acetylmethionine mark. Positions 93–173 (LPTFTTWPLV…RGFSVLHTYQ (81 aa)) constitute a PUA domain. The segment at 223-257 (EEENGEVHQAREDKSLSEAPEDTSTRGLNQDSTDS) is disordered. The segment covering 227–238 (GEVHQAREDKSL) has biased composition (basic and acidic residues). Residues Ser-237, Ser-254, and Ser-361 each carry the phosphoserine modification. Residues 247 to 257 (TRGLNQDSTDS) show a composition bias toward polar residues. The SWIB/MDM2 domain occupies 383–467 (PLYCVPASMT…DSLLTRCLEK (85 aa)). Positions 491-564 (IDITLAQRAS…HLGWLLLEEY (74 aa)) constitute an SUI1 domain.

This sequence belongs to the eIF2D family.

The protein resides in the cytoplasm. Translation initiation factor that is able to deliver tRNA to the P-site of the eukaryotic ribosome in a GTP-independent manner. The binding of Met-tRNA(I) occurs after the AUG codon finds its position in the P-site of 40S ribosomes, the situation that takes place during initiation complex formation on some specific RNAs. Its activity in tRNA binding with 40S subunits does not require the presence of the aminoacyl moiety. Possesses the unique ability to deliver non-Met (elongator) tRNAs into the P-site of the 40S subunit. In addition to its role in initiation, can promote release of deacylated tRNA and mRNA from recycled 40S subunits following ABCE1-mediated dissociation of post-termination ribosomal complexes into subunits. This chain is Eukaryotic translation initiation factor 2D (EIF2D), found in Homo sapiens (Human).